The sequence spans 482 residues: Rhamnulokinase (482 aa).

13–17 (ASSGR) contacts ATP. Residues Gly-83 and 232–234 (HDT) contribute to the substrate site. Asp-233 acts as the Proton acceptor in catalysis. Thr-255 is an ATP binding site. A substrate-binding site is contributed by Asn-292. Asn-300 is an ATP binding site. Residues Cys-349 and Cys-366 are joined by a disulfide bond. Gly-398 provides a ligand contact to ATP. Cys-409 and Cys-413 are joined by a disulfide.

Belongs to the rhamnulokinase family. Requires Mg(2+) as cofactor.

It catalyses the reaction L-rhamnulose + ATP = L-rhamnulose 1-phosphate + ADP + H(+). It participates in carbohydrate degradation; L-rhamnose degradation; glycerone phosphate from L-rhamnose: step 2/3. Involved in the catabolism of L-rhamnose (6-deoxy-L-mannose). Catalyzes the transfer of the gamma-phosphate group from ATP to the 1-hydroxyl group of L-rhamnulose to yield L-rhamnulose 1-phosphate. The polypeptide is Rhamnulokinase (Mannheimia succiniciproducens (strain KCTC 0769BP / MBEL55E)).